The following is a 257-amino-acid chain: DNA repair protein RecO (257 aa).

It belongs to the RecO family.

Functionally, involved in DNA repair and RecF pathway recombination. The chain is DNA repair protein RecO from Variovorax paradoxus (strain S110).